A 760-amino-acid chain; its full sequence is U-box domain-containing protein 3 (760 aa).

A coiled-coil region spans residues 146–217 (LMELMENALR…EQTEQLIELV (72 aa)). In terms of domain architecture, U-box spans 237–311 (SIPPYFRCPL…ASWLEANRIN (75 aa)). Over residues 424-434 (ILGNHQSSSEM) the composition is skewed to polar residues. Residues 424 to 448 (ILGNHQSSSEMSPKKNLESSNNVNH) form a disordered region. ARM repeat units lie at residues 504-543 (IENR…NLSI), 545-584 (ELNK…SLSV), 586-626 (QVNR…NLSI), 628-666 (HDNK…NLSA), and 668-707 (GEGR…QLCL).

The enzyme catalyses S-ubiquitinyl-[E2 ubiquitin-conjugating enzyme]-L-cysteine + [acceptor protein]-L-lysine = [E2 ubiquitin-conjugating enzyme]-L-cysteine + N(6)-ubiquitinyl-[acceptor protein]-L-lysine.. The protein operates within protein modification; protein ubiquitination. Functionally, functions as an E3 ubiquitin ligase. This is U-box domain-containing protein 3 (PUB3) from Arabidopsis thaliana (Mouse-ear cress).